Here is a 445-residue protein sequence, read N- to C-terminus: Trigger factor (445 aa).

The 86-residue stretch at 162–247 folds into the PPIase FKBP-type domain; it reads GDQVTIDAIG…IKAVHTAEPT (86 aa).

Belongs to the FKBP-type PPIase family. Tig subfamily.

It localises to the cytoplasm. It catalyses the reaction [protein]-peptidylproline (omega=180) = [protein]-peptidylproline (omega=0). Functionally, involved in protein export. Acts as a chaperone by maintaining the newly synthesized protein in an open conformation. Functions as a peptidyl-prolyl cis-trans isomerase. The sequence is that of Trigger factor from Rickettsia conorii (strain ATCC VR-613 / Malish 7).